Here is a 199-residue protein sequence, read N- to C-terminus: Adenylate kinase (199 aa).

Residue 10 to 15 (GAGKGT) coordinates ATP. The segment at 30–59 (STGDMLRAAVAARTPVGLQAKSIMESGGLV) is NMP. AMP-binding positions include T31, R36, 57–59 (GLV), 85–88 (GFPR), and Q92. The tract at residues 126 to 142 (KRAAETLARGEAVRKDD) is LID. R127 provides a ligand contact to ATP. Residues R139 and R150 each coordinate AMP. A178 is a binding site for ATP.

The protein belongs to the adenylate kinase family. Monomer.

Its subcellular location is the cytoplasm. The enzyme catalyses AMP + ATP = 2 ADP. It participates in purine metabolism; AMP biosynthesis via salvage pathway; AMP from ADP: step 1/1. Functionally, catalyzes the reversible transfer of the terminal phosphate group between ATP and AMP. Plays an important role in cellular energy homeostasis and in adenine nucleotide metabolism. The chain is Adenylate kinase from Methylobacterium nodulans (strain LMG 21967 / CNCM I-2342 / ORS 2060).